The sequence spans 90 residues: Lectin-1 (90 aa).

Gln1 is subject to Pyrrolidone carboxylic acid. A disulfide bridge links Cys46 with Cys71.

Post-translationally, the N-terminus is blocked. Contains seven disulfide bonds. In terms of processing, proteolytically cleaved. Major form may consist of cleaved, disulfide-bonded subunits.

In terms of biological role, lectin with specificity for complex N-linked glycans and O-linked glycans. Has hemagglutinating activity towards rabbit erythrocytes that is inhibited by N-acetyl-D-galactosamine. This is Lectin-1 from Hypnea cervicornis (Brazilian red alga).